We begin with the raw amino-acid sequence, 108 residues long: Nucleoid-associated protein ACP_0492 (108 aa).

Belongs to the YbaB/EbfC family. As to quaternary structure, homodimer.

Its subcellular location is the cytoplasm. The protein localises to the nucleoid. Binds to DNA and alters its conformation. May be involved in regulation of gene expression, nucleoid organization and DNA protection. This chain is Nucleoid-associated protein ACP_0492, found in Acidobacterium capsulatum (strain ATCC 51196 / DSM 11244 / BCRC 80197 / JCM 7670 / NBRC 15755 / NCIMB 13165 / 161).